Reading from the N-terminus, the 673-residue chain is uncharacterized protein (673 aa).

The interval 1-95 (MLNGEKSALG…QSSAIADSIG (95 aa)) is disordered. The span at 13–40 (PSNSNSSSKLNAKSPNFIPSSSNIPRSS) shows a compositional bias: low complexity. Residues 42–60 (KTKEHSADRKPHRNSEKKT) are compositionally biased toward basic and acidic residues. The RING-type zinc-finger motif lies at 214-273 (CPFCLEEKPVAARMSRCGHVYCFSCLLRFVETPTAAEVKAAETSGTKIVKCGHRSCPICW). The interval 649 to 673 (SAPSKNSKNKKKKKLVLLSTGAAHR) is disordered.

The protein resides in the cytoplasm. The protein localises to the nucleus. This is an uncharacterized protein from Schizosaccharomyces pombe (strain 972 / ATCC 24843) (Fission yeast).